The following is a 367-amino-acid chain: Female-specific protein transformer (367 aa).

A disordered region spans residues 86-280 (ESISSKKIKS…HRHHRSQERS (195 aa)). The segment covering 109–129 (VKQNSPDVTQKFTKKYGSSEN) has biased composition (polar residues). Basic and acidic residues predominate over residues 130–144 (PDFRRHSSYEKDNYH). A compositionally biased stretch (basic residues) spans 195-223 (NRRRSSHRSRRGSGSPRSRRYTSRHRRRS). Over residues 229–238 (TSWKHNPEHR) the composition is skewed to basic and acidic residues. Positions 239–257 (TSRRSRTRSPRGNRSRRRS) are enriched in basic residues.

Its function is as follows. Sex differentiation protein controlling female somatic sexual differentiation. May act by promoting the formation of a splicing enhancer complex. The protein is Female-specific protein transformer of Musca domestica (House fly).